Here is a 607-residue protein sequence, read N- to C-terminus: Major facilitator superfamily multidrug transporter mdrA (607 aa).

Transmembrane regions (helical) follow at residues 77–97 (MTVAVSTLAVALVSSAYTGGV), 110–130 (VATLGVSLFVLGFAIGPLLWA), 139–159 (QIIFTVTYCALTAFNAGSAGA), 170–190 (FFAGAFGASPLTNAGGVIADM), 202–222 (LFAAAPFLGPVLGPIIGGFLG), 229–249 (WVMGFLGAFSGAVWIICTIFV), 305–325 (PIVFLLSLYMAIIYGTLYMLF), 342–362 (VSSLPFLGIMVGMMFAVTYSV), 385–405 (LPPTLIASVAIPIGLFWFAWT), 413–433 (IVCILAGAPFGFGMVLVFLGI), 443–463 (IFAASVLAANSVLRSIFGAVF), and 478–498 (WASSIPAFLALACVPFPFLFY). The interval 523–583 (EQMKQAPEPE…ASTRTASSLR (61 aa)) is disordered. The segment covering 553-564 (DVSETESNVEEL) has biased composition (acidic residues). Over residues 572-583 (SRASTRTASSLR) the composition is skewed to low complexity.

The protein belongs to the major facilitator superfamily. DHA1 family. Polyamines/proton antiporter (TC 2.A.1.2.16) subfamily.

The protein resides in the cell membrane. In terms of biological role, MFS transporter involved in the basal level of azole susceptibility. Confers resistance to voriconazole and, to a lesser extent, to fluconazole. The chain is Major facilitator superfamily multidrug transporter mdrA from Aspergillus fumigatus (strain ATCC MYA-4609 / CBS 101355 / FGSC A1100 / Af293) (Neosartorya fumigata).